The primary structure comprises 297 residues: tRNA dimethylallyltransferase (297 aa).

Residue 10–17 (GITASGKS) coordinates ATP. Residue 12 to 17 (TASGKS) participates in substrate binding. Positions 36–39 (DSKQ) are interaction with substrate tRNA.

Belongs to the IPP transferase family. In terms of assembly, monomer. Mg(2+) is required as a cofactor.

The enzyme catalyses adenosine(37) in tRNA + dimethylallyl diphosphate = N(6)-dimethylallyladenosine(37) in tRNA + diphosphate. In terms of biological role, catalyzes the transfer of a dimethylallyl group onto the adenine at position 37 in tRNAs that read codons beginning with uridine, leading to the formation of N6-(dimethylallyl)adenosine (i(6)A). This is tRNA dimethylallyltransferase from Wolbachia pipientis wMel.